Here is a 534-residue protein sequence, read N- to C-terminus: Neryl diphosphate diphosphatase, chloroplastic (534 aa).

4 residues coordinate Mg(2+): Asp272, Asp276, Asp416, and Glu424. The short motif at 272-276 is the DDXXD motif element; it reads DDIFD.

Belongs to the terpene synthase family. Mg(2+) is required as a cofactor.

The protein resides in the plastid. It localises to the chloroplast. It catalyses the reaction neryl diphosphate + H2O = nerol + diphosphate. The protein operates within secondary metabolite biosynthesis; terpenoid biosynthesis. Functionally, monoterpene synthase that catalyzes the hydrolysis of neryl diphosphate (NPP) to form nerol and diphosphate. Is specific for NPP and has no hydrolase activity toward geranyl diphosphate (GPP) or farnesyl diphosphate (FPP). The monoterpene nerol may have an insect repellent effect for the plant leaves. This Glycine max (Soybean) protein is Neryl diphosphate diphosphatase, chloroplastic.